The primary structure comprises 250 residues: Ribonucleotide monophosphatase NagD (250 aa).

The Mg(2+) site is built by Asp-9 and Asp-11. The active site involves Asp-11. Substrate is bound by residues Asp-11, 42–43, and Lys-176; that span reads TN. Asp-201 lines the Mg(2+) pocket. 202 to 205 is a substrate binding site; the sequence is NLRT.

This sequence belongs to the HAD-like hydrolase superfamily. NagD family. As to quaternary structure, monomer. Mg(2+) is required as a cofactor. It depends on Mn(2+) as a cofactor. Requires Co(2+) as cofactor. Zn(2+) serves as cofactor.

It catalyses the reaction a ribonucleoside 5'-phosphate + H2O = a ribonucleoside + phosphate. In terms of biological role, catalyzes the dephosphorylation of an unusually broad range of substrate including deoxyribo- and ribonucleoside tri-, di-, and monophosphates, as well as polyphosphate and glucose-1-P (Glu1P). This is Ribonucleotide monophosphatase NagD (nagD) from Escherichia coli O157:H7.